A 345-amino-acid chain; its full sequence is Serpentine receptor class beta-5 (345 aa).

At 1-22 (MAEINQTKCDLAFQISYHPIYR) the chain is on the extracellular side. The N-linked (GlcNAc...) asparagine glycan is linked to asparagine 5. Residues 23–43 (LAQFWTLSVSLLAVPSLLYFL) traverse the membrane as a helical segment. Topologically, residues 44 to 57 (LKRVLLLPFHGNLK) are cytoplasmic. Residues 58–78 (CLLITYFSSIFLYALVLCFDF) form a helical membrane-spanning segment. Topologically, residues 79 to 103 (SYQCLIPFIVTTKCSLIIDQTLYKC) are extracellular. The helical transmembrane segment at 104-124 (GHMTSLFFLTTPMLLPFGFSI) threads the bilayer. The Cytoplasmic segment spans residues 125–142 (ERFVAVGMAYKYEKMRTL). A helical membrane pass occupies residues 143 to 163 (LGPILCFILVAPNFVVFYFLF). Residues 164 to 189 (RDEQFTDSFISFLVLPNTPAVQFNNY) lie on the Extracellular side of the membrane. The helical transmembrane segment at 190–210 (LWFLLYAKIGNFCCNCVLLIF) threads the bilayer. Over 211-241 (HKRFKNTYLKKKTSLSVRYALEEISNSSKFT) the chain is Cytoplasmic. The helical transmembrane segment at 242 to 262 (LILTFTHLVFFGAYTIGSILV) threads the bilayer. At 263–280 (RTLGESFFGNFLNFYVAR) the chain is on the extracellular side. A helical transmembrane segment spans residues 281 to 301 (GVNCAVPTYNLLIAFVGLISL). The Cytoplasmic portion of the chain corresponds to 302 to 345 (RQLNSRRHAKILTKVLIRVTGQEGARNYDDIIMQQWNTVSNRTR).

This sequence belongs to the nematode receptor-like protein srb family. As to expression, expressed throughout the head.

It is found in the cell membrane. The protein localises to the perikaryon. It localises to the cell projection. Its subcellular location is the dendrite. Functionally, G-protein coupled receptor. Plays a role in the navigational capacity of sperm and promotes the targeting of sperm derived from males to the fertilization site in the uterus of hermaphrodites. The polypeptide is Serpentine receptor class beta-5 (Caenorhabditis elegans).